A 350-amino-acid polypeptide reads, in one-letter code: Hydroxymethylglutaryl-CoA synthase (350 aa).

D30 lines the (3S)-3-hydroxy-3-methylglutaryl-CoA pocket. Residue E82 is the Proton donor/acceptor of the active site. (3S)-3-hydroxy-3-methylglutaryl-CoA-binding residues include C114, S155, T203, and H236. C114 (acyl-thioester intermediate) is an active-site residue. Residue H236 is the Proton donor/acceptor of the active site. Residue R241 coordinates CoA. R245, N268, and S298 together coordinate (3S)-3-hydroxy-3-methylglutaryl-CoA.

This sequence belongs to the thiolase-like superfamily. Archaeal HMG-CoA synthase family. In terms of assembly, interacts with acetoacetyl-CoA thiolase that catalyzes the precedent step in the pathway and with a DUF35 protein. The acetoacetyl-CoA thiolase/HMG-CoA synthase complex channels the intermediate via a fused CoA-binding site, which allows for efficient coupling of the endergonic thiolase reaction with the exergonic HMGCS reaction.

It catalyses the reaction acetoacetyl-CoA + acetyl-CoA + H2O = (3S)-3-hydroxy-3-methylglutaryl-CoA + CoA + H(+). The protein operates within metabolic intermediate biosynthesis; (R)-mevalonate biosynthesis; (R)-mevalonate from acetyl-CoA: step 2/3. Functionally, catalyzes the condensation of acetyl-CoA with acetoacetyl-CoA to form 3-hydroxy-3-methylglutaryl-CoA (HMG-CoA). Functions in the mevalonate (MVA) pathway leading to isopentenyl diphosphate (IPP), a key precursor for the biosynthesis of isoprenoid compounds that are building blocks of archaeal membrane lipids. The polypeptide is Hydroxymethylglutaryl-CoA synthase (Pyrobaculum calidifontis (strain DSM 21063 / JCM 11548 / VA1)).